Consider the following 393-residue polypeptide: Probable tRNA sulfurtransferase (393 aa).

The THUMP domain maps to 61–168; the sequence is DEVIESLTRV…GDVINIYSIE (108 aa). ATP is bound by residues 186-187, 211-212, Arg268, Gly290, and Gln299; these read LL and YF.

The protein belongs to the ThiI family.

Its subcellular location is the cytoplasm. The enzyme catalyses [ThiI sulfur-carrier protein]-S-sulfanyl-L-cysteine + a uridine in tRNA + 2 reduced [2Fe-2S]-[ferredoxin] + ATP + H(+) = [ThiI sulfur-carrier protein]-L-cysteine + a 4-thiouridine in tRNA + 2 oxidized [2Fe-2S]-[ferredoxin] + AMP + diphosphate. It carries out the reaction [ThiS sulfur-carrier protein]-C-terminal Gly-Gly-AMP + S-sulfanyl-L-cysteinyl-[cysteine desulfurase] + AH2 = [ThiS sulfur-carrier protein]-C-terminal-Gly-aminoethanethioate + L-cysteinyl-[cysteine desulfurase] + A + AMP + 2 H(+). It participates in cofactor biosynthesis; thiamine diphosphate biosynthesis. Its function is as follows. Catalyzes the ATP-dependent transfer of a sulfur to tRNA to produce 4-thiouridine in position 8 of tRNAs, which functions as a near-UV photosensor. Also catalyzes the transfer of sulfur to the sulfur carrier protein ThiS, forming ThiS-thiocarboxylate. This is a step in the synthesis of thiazole, in the thiamine biosynthesis pathway. The sulfur is donated as persulfide by IscS. This is Probable tRNA sulfurtransferase from Lachnospira eligens (strain ATCC 27750 / DSM 3376 / VPI C15-48 / C15-B4) (Eubacterium eligens).